Reading from the N-terminus, the 74-residue chain is Tetrahydromethanopterin S-methyltransferase subunit G (74 aa).

A helical membrane pass occupies residues 50-70 (IGILYGLVIGLYLCMLYILLG).

It belongs to the MtrG family. The complex is composed of 8 subunits; MtrA, MtrB, MtrC, MtrD, MtrE, MtrF, MtrG and MtrH.

The protein localises to the cell membrane. It catalyses the reaction 5-methyl-5,6,7,8-tetrahydromethanopterin + coenzyme M + 2 Na(+)(in) = 5,6,7,8-tetrahydromethanopterin + methyl-coenzyme M + 2 Na(+)(out). Its pathway is one-carbon metabolism; methanogenesis from CO(2); methyl-coenzyme M from 5,10-methylene-5,6,7,8-tetrahydromethanopterin: step 2/2. Functionally, part of a complex that catalyzes the formation of methyl-coenzyme M and tetrahydromethanopterin from coenzyme M and methyl-tetrahydromethanopterin. This is an energy-conserving, sodium-ion translocating step. The protein is Tetrahydromethanopterin S-methyltransferase subunit G of Methanopyrus kandleri (strain AV19 / DSM 6324 / JCM 9639 / NBRC 100938).